A 367-amino-acid chain; its full sequence is MSELRFPEEKPLLRGQDTEMESADTFMSAADTDWKEHDIETPYGMLHVVIRGTPKGNRPAILTYHDVGLNHKLCFNTFFNYEDMQEITKHFVVCHVDAPGQQVGASQFPQGYQYPTMEQLAAMLPSVMQHFGFQSIIGIGVGAGAYVFAKFALIFPELVEGMVLINIDPNGKGWIDWAASKLSGLTSSLPETVLSHLFSQEELMNNTELVQNYRQQISSCVNQSNLQLFWNMYNSRRDLEMSRPGTVPNAKTLRAPVMLVVGDNAPAEDSVVECNSKLDPTNTTFLKMADSGGLPQVTQPGKLTEAFKYFLQGMGYMPSASMTRLARSRTASLTSASSVDGARPRPCTQSESSDGIGQINHTMEVSC.

Basic and acidic residues predominate over residues 1-12; sequence MSELRFPEEKPL. Disordered stretches follow at residues 1–21 and 333–367; these read MSEL…TEME and LTSA…EVSC. The segment covering 347–367 has biased composition (polar residues); the sequence is CTQSESSDGIGQINHTMEVSC.

Belongs to the NDRG family.

Its subcellular location is the cytoplasm. It is found in the cytosol. In terms of biological role, contributes to the maintenance of intracerebral BDNF levels within the normal range. May enhance growth factor-induced ERK1 and ERK2 phosphorylation. May attenuate growth factor-promoted ELK1 phosphorylation in a microtubule-dependent manner. In Xenopus laevis (African clawed frog), this protein is Protein NDRG4-B (ndrg4-b).